Consider the following 114-residue polypeptide: PDZK1-interacting protein 1 (114 aa).

Residues 1–28 (MSAFGLLILGLLTAVPPASCRQGLGNLQ) are Extracellular-facing. Residues 29–51 (PWMQGLIAVAVFLVLVAIAFAVN) form a helical membrane-spanning segment. The Cytoplasmic segment spans residues 52-114 (HFWCQEEPEP…EEGKVRSTPM (63 aa)). Ser-85 is subject to Phosphoserine. Residues 95-114 (HENAYENVPEEEGKVRSTPM) form a disordered region. Positions 105-114 (EEGKVRSTPM) are enriched in basic and acidic residues.

The protein belongs to the PDZK1-interacting protein 1/SMIM24 family. In terms of assembly, forms a heterodimer (via N-terminal transmembrane helix) with SLC5A2/SGLT2 (via TM13); this interaction enhances SLC5A2 transporter activity. Interacts with PDZK1.

It localises to the apical cell membrane. Its function is as follows. Auxiliary protein of electrogenic Na(+)-coupled sugar symporter SLC5A2/SGLT2 and SLC5A1/SGLT1. Essential for the transporter activity of SLC5A2/SGLT2 but not SLC5A1/SGLT1. The protein is PDZK1-interacting protein 1 of Pongo abelii (Sumatran orangutan).